A 221-amino-acid chain; its full sequence is Lipoprotein-releasing system ATP-binding protein LolD (221 aa).

An ABC transporter domain is found at 8–220 (LKMISKHYKQ…YNLKHGLLNI (213 aa)). 42–49 (GSSGSGKS) is an ATP binding site.

The protein belongs to the ABC transporter superfamily. Lipoprotein translocase (TC 3.A.1.125) family. The complex is composed of two ATP-binding proteins (LolD) and two transmembrane proteins (LolC and LolE).

The protein resides in the cell inner membrane. In terms of biological role, part of the ABC transporter complex LolCDE involved in the translocation of mature outer membrane-directed lipoproteins, from the inner membrane to the periplasmic chaperone, LolA. Responsible for the formation of the LolA-lipoprotein complex in an ATP-dependent manner. This Rickettsia prowazekii (strain Madrid E) protein is Lipoprotein-releasing system ATP-binding protein LolD.